A 190-amino-acid polypeptide reads, in one-letter code: Probable nicotinate-nucleotide adenylyltransferase (190 aa).

This sequence belongs to the NadD family.

It catalyses the reaction nicotinate beta-D-ribonucleotide + ATP + H(+) = deamido-NAD(+) + diphosphate. Its pathway is cofactor biosynthesis; NAD(+) biosynthesis; deamido-NAD(+) from nicotinate D-ribonucleotide: step 1/1. Catalyzes the reversible adenylation of nicotinate mononucleotide (NaMN) to nicotinic acid adenine dinucleotide (NaAD). This Frankia alni (strain DSM 45986 / CECT 9034 / ACN14a) protein is Probable nicotinate-nucleotide adenylyltransferase.